The chain runs to 112 residues: T cell receptor alpha variable 21 (112 aa).

The N-terminal stretch at 1 to 19 (METLLGLLILWLQLQWVSS) is a signal peptide. The Ig-like domain occupies 21–112 (QEVTQIPAAL…DSATYLCAVR (92 aa)). N-linked (GlcNAc...) asparagine glycans are attached at residues asparagine 41 and asparagine 82. Residues cysteine 42 and cysteine 109 are joined by a disulfide bond.

In terms of assembly, alpha-beta TR is a heterodimer composed of an alpha and beta chain; disulfide-linked. The alpha-beta TR is associated with the transmembrane signaling CD3 coreceptor proteins to form the TR-CD3 (TcR or TCR). The assembly of alpha-beta TR heterodimers with CD3 occurs in the endoplasmic reticulum where a single alpha-beta TR heterodimer associates with one CD3D-CD3E heterodimer, one CD3G-CD3E heterodimer and one CD247 homodimer forming a stable octameric structure. CD3D-CD3E and CD3G-CD3E heterodimers preferentially associate with TR alpha and TR beta chains, respectively. The association of the CD247 homodimer is the last step of TcR assembly in the endoplasmic reticulum and is required for transport to the cell surface.

The protein localises to the cell membrane. Functionally, v region of the variable domain of T cell receptor (TR) alpha chain that participates in the antigen recognition. Alpha-beta T cell receptors are antigen specific receptors which are essential to the immune response and are present on the cell surface of T lymphocytes. Recognize peptide-major histocompatibility (MH) (pMH) complexes that are displayed by antigen presenting cells (APC), a prerequisite for efficient T cell adaptive immunity against pathogens. Binding of alpha-beta TR to pMH complex initiates TR-CD3 clustering on the cell surface and intracellular activation of LCK that phosphorylates the ITAM motifs of CD3G, CD3D, CD3E and CD247 enabling the recruitment of ZAP70. In turn ZAP70 phosphorylates LAT, which recruits numerous signaling molecules to form the LAT signalosome. The LAT signalosome propagates signal branching to three major signaling pathways, the calcium, the mitogen-activated protein kinase (MAPK) kinase and the nuclear factor NF-kappa-B (NF-kB) pathways, leading to the mobilization of transcription factors that are critical for gene expression and essential for T cell growth and differentiation. The T cell repertoire is generated in the thymus, by V-(D)-J rearrangement. This repertoire is then shaped by intrathymic selection events to generate a peripheral T cell pool of self-MH restricted, non-autoaggressive T cells. Post-thymic interaction of alpha-beta TR with the pMH complexes shapes TR structural and functional avidity. In Homo sapiens (Human), this protein is T cell receptor alpha variable 21.